The sequence spans 361 residues: Spermidine/putrescine import ATP-binding protein PotA (361 aa).

The ABC transporter domain maps to 7-241 (IEVRNVSKRY…PQHRFVAQFI (235 aa)). 43–50 (GPSGCGKT) serves as a coordination point for ATP.

It belongs to the ABC transporter superfamily. Spermidine/putrescine importer (TC 3.A.1.11.1) family. The complex is composed of two ATP-binding proteins (PotA), two transmembrane proteins (PotB and PotC) and a solute-binding protein (PotD).

Its subcellular location is the cell inner membrane. It catalyses the reaction ATP + H2O + polyamine-[polyamine-binding protein]Side 1 = ADP + phosphate + polyamineSide 2 + [polyamine-binding protein]Side 1.. In terms of biological role, part of the ABC transporter complex PotABCD involved in spermidine/putrescine import. Responsible for energy coupling to the transport system. This is Spermidine/putrescine import ATP-binding protein PotA from Pseudomonas fluorescens (strain Pf0-1).